Here is a 136-residue protein sequence, read N- to C-terminus: Galectin-7 (136 aa).

One can recognise a Galectin domain in the interval 6 to 136 (HKTPLPQGVR…DVQLHSVKIF (131 aa)). 70-76 (WGREERG) is a binding site for a beta-D-galactoside.

As to quaternary structure, monomer.

The protein localises to the cytoplasm. It is found in the nucleus. It localises to the secreted. Its function is as follows. Could be involved in cell-cell and/or cell-matrix interactions necessary for normal growth control. Pro-apoptotic protein that functions intracellularly upstream of JNK activation and cytochrome c release. This is Galectin-7 (Lgals7) from Rattus norvegicus (Rat).